We begin with the raw amino-acid sequence, 47 residues long: MKKFRWVALVVVVLACLLLWAQVFNMMCDQDVQFFSGICALNQFIPW.

A helical membrane pass occupies residues tryptophan 6–methionine 26.

It belongs to the MgrB family. In terms of assembly, may form homooligomers. Probably interacts with the periplasmic domain of PhoQ.

It localises to the cell inner membrane. In terms of biological role, phoP-regulated transcription is redox-sensitive, being activated when the periplasm becomes more reducing. MgrB acts between DsbA/DsbB and PhoP/PhoQ in this pathway. Represses PhoP/PhoQ signaling, possibly by binding to the periplasmic domain of PhoQ, altering its activity and that of downstream effector PhoP. This is PhoP/PhoQ regulator MgrB from Escherichia coli O1:K1 / APEC.